We begin with the raw amino-acid sequence, 188 residues long: GMP synthase [glutamine-hydrolyzing] subunit A (188 aa).

The Glutamine amidotransferase type-1 domain occupies 2-188; that stretch reads KVAVIYFGGQ…FKNFIKICRK (187 aa). The Nucleophile role is filled by Cys-79. Active-site residues include His-166 and Glu-168.

In terms of assembly, heterodimer composed of a glutamine amidotransferase subunit (A) and a GMP-binding subunit (B).

It catalyses the reaction XMP + L-glutamine + ATP + H2O = GMP + L-glutamate + AMP + diphosphate + 2 H(+). Its pathway is purine metabolism; GMP biosynthesis; GMP from XMP (L-Gln route): step 1/1. In terms of biological role, catalyzes the synthesis of GMP from XMP. The chain is GMP synthase [glutamine-hydrolyzing] subunit A from Sulfolobus acidocaldarius (strain ATCC 33909 / DSM 639 / JCM 8929 / NBRC 15157 / NCIMB 11770).